The following is a 308-amino-acid chain: MSRRRRGQAIHGWLAIDKPVGITSTDVVNRLRRTMDAAKVGHGGTLDPLASGVLPIAFGEATKTVSYVMDGTKVYHMVVGWGEARDTDDREGKVIDTSDVRPDAQAITAMLARFTGEIEQVPPIYSAVKVEGRRSYDLARADQAVELKSRKILIKDLTLLETSTPDFGHFRIVSGKGAYMRSLARDLALALGTVGHVVALRRLACGPFTAETAISLDMVDALGHDAPHSESLLPIEAALADIPAVPLTEAEARRLSQGQPVSLLHLASRTPLNGLAQGETVQALLNGKLVALAKIVEGEIRPLRVVNL.

Residue aspartate 47 is the Nucleophile of the active site.

This sequence belongs to the pseudouridine synthase TruB family. Type 1 subfamily.

The catalysed reaction is uridine(55) in tRNA = pseudouridine(55) in tRNA. In terms of biological role, responsible for synthesis of pseudouridine from uracil-55 in the psi GC loop of transfer RNAs. This chain is tRNA pseudouridine synthase B, found in Rhodospirillum rubrum (strain ATCC 11170 / ATH 1.1.1 / DSM 467 / LMG 4362 / NCIMB 8255 / S1).